The following is a 237-amino-acid chain: Large ribosomal subunit protein uL1 (237 aa).

It belongs to the universal ribosomal protein uL1 family. As to quaternary structure, part of the 50S ribosomal subunit.

Functionally, binds directly to 23S rRNA. The L1 stalk is quite mobile in the ribosome, and is involved in E site tRNA release. Protein L1 is also a translational repressor protein, it controls the translation of the L11 operon by binding to its mRNA. The chain is Large ribosomal subunit protein uL1 from Thermosynechococcus vestitus (strain NIES-2133 / IAM M-273 / BP-1).